A 318-amino-acid chain; its full sequence is NADH-ubiquinone oxidoreductase chain 1 (318 aa).

Transmembrane regions (helical) follow at residues 2–22, 68–88, 102–122, 146–166, 171–191, 217–237, 253–273, and 294–314; these read FLMN…FLTL, ISLF…MWIP, ILFI…SGWA, LAII…SSLI, FTWL…STLA, AGPF…MNAL, EMFT…FLWI, and LPLT…MACI.

Belongs to the complex I subunit 1 family.

The protein resides in the mitochondrion inner membrane. It carries out the reaction a ubiquinone + NADH + 5 H(+)(in) = a ubiquinol + NAD(+) + 4 H(+)(out). Functionally, core subunit of the mitochondrial membrane respiratory chain NADH dehydrogenase (Complex I) that is believed to belong to the minimal assembly required for catalysis. Complex I functions in the transfer of electrons from NADH to the respiratory chain. The immediate electron acceptor for the enzyme is believed to be ubiquinone. This Tamias sibiricus (Siberian chipmunk) protein is NADH-ubiquinone oxidoreductase chain 1 (MT-ND1).